The chain runs to 334 residues: Glyoxylate reductase (334 aa).

NADP(+) is bound by residues 158–161 (LGRI), 180–182 (SRT), and 239–241 (IAR). Residues Arg241 and Glu270 contribute to the active site. The Proton donor role is filled by His288. An NADP(+)-binding site is contributed by 288–290 (HIG).

It belongs to the D-isomer specific 2-hydroxyacid dehydrogenase family. GyaR subfamily. Homodimer.

It localises to the cytoplasm. The catalysed reaction is glycolate + NAD(+) = glyoxylate + NADH + H(+). The chain is Glyoxylate reductase (gyaR) from Pyrococcus horikoshii (strain ATCC 700860 / DSM 12428 / JCM 9974 / NBRC 100139 / OT-3).